A 663-amino-acid chain; its full sequence is UvrABC system protein B (663 aa).

Basic and acidic residues predominate over residues 1 to 10 (MIDKRDDKPF). A disordered region spans residues 1-23 (MIDKRDDKPFKLKSKYKPSGDQP). Residues 31-418 (DNIEGGEKAQ…TNTIIEQIIR (388 aa)) form the Helicase ATP-binding domain. 44–51 (GATGTGKT) serves as a coordination point for ATP. A Beta-hairpin motif is present at residues 97–120 (YYDYYQPEAYVPSSDTYIEKDSSV). Positions 435–601 (QMDDLLGEIN…TIKKDIRGLI (167 aa)) constitute a Helicase C-terminal domain. In terms of domain architecture, UVR spans 627–662 (KEAINALQKQMQEAAELLDFELAAQMRDLILELKLM).

The protein belongs to the UvrB family. As to quaternary structure, forms a heterotetramer with UvrA during the search for lesions. Interacts with UvrC in an incision complex.

It is found in the cytoplasm. In terms of biological role, the UvrABC repair system catalyzes the recognition and processing of DNA lesions. A damage recognition complex composed of 2 UvrA and 2 UvrB subunits scans DNA for abnormalities. Upon binding of the UvrA(2)B(2) complex to a putative damaged site, the DNA wraps around one UvrB monomer. DNA wrap is dependent on ATP binding by UvrB and probably causes local melting of the DNA helix, facilitating insertion of UvrB beta-hairpin between the DNA strands. Then UvrB probes one DNA strand for the presence of a lesion. If a lesion is found the UvrA subunits dissociate and the UvrB-DNA preincision complex is formed. This complex is subsequently bound by UvrC and the second UvrB is released. If no lesion is found, the DNA wraps around the other UvrB subunit that will check the other stand for damage. This chain is UvrABC system protein B, found in Streptococcus pyogenes serotype M6 (strain ATCC BAA-946 / MGAS10394).